We begin with the raw amino-acid sequence, 457 residues long: Glutamate--tRNA ligase 1 (457 aa).

The short motif at 9–19 (PSPTGYIHIGN) is the 'HIGH' region element. The 'KMSKS' region signature appears at 250 to 254 (GLSKR). Position 253 (lysine 253) interacts with ATP.

This sequence belongs to the class-I aminoacyl-tRNA synthetase family. Glutamate--tRNA ligase type 1 subfamily. In terms of assembly, monomer.

The protein resides in the cytoplasm. The enzyme catalyses tRNA(Glu) + L-glutamate + ATP = L-glutamyl-tRNA(Glu) + AMP + diphosphate. Its function is as follows. Catalyzes the attachment of glutamate to tRNA(Glu) in a two-step reaction: glutamate is first activated by ATP to form Glu-AMP and then transferred to the acceptor end of tRNA(Glu). The sequence is that of Glutamate--tRNA ligase 1 from Brucella canis (strain ATCC 23365 / NCTC 10854 / RM-666).